We begin with the raw amino-acid sequence, 79 residues long: Beta-defensin 15 (79 aa).

Residues 1–20 (MKTFLFLFAVFFFLDPAKNA) form the signal peptide. 3 disulfides stabilise this stretch: C26-C53, C33-C47, and C37-C54.

Belongs to the beta-defensin family.

The protein localises to the secreted. Functionally, has antibacterial activity. In Rattus norvegicus (Rat), this protein is Beta-defensin 15 (Defb15).